The chain runs to 206 residues: Platelet glycoprotein Ib beta chain (206 aa).

A signal peptide spans 1 to 26 (MGSRPRGALSLLLLLLALLSRPASGC). 2 disulfides stabilise this stretch: Cys26-Cys32 and Cys30-Cys39. An LRRNT domain is found at 27-55 (PAPCSCAGTLVDCGRRGLTWASLPAAFPP). The Extracellular segment spans residues 27 to 147 (PAPCSCAGTL…RAACAPGLLC (121 aa)). One copy of the LRR repeat lies at 60–83 (LVLTGNNLTALPPGLLDALPALRA). Residue Asn66 is glycosylated (N-linked (GlcNAc...) asparagine). The LRRCT domain maps to 89–143 (NPWRCDCRLLPLRAWLAGRPERAPYRDLRCVAPPALRGRLLPYVAEDELRAACAP). Disulfide bonds link Cys93/Cys118 and Cys95/Cys141. A helical transmembrane segment spans residues 148–172 (WGALVAQLALLVLGLLHALLLALLL). Topologically, residues 173 to 206 (GRLRRLRARARARSIQEFSLTAPLVAESARGGAS) are cytoplasmic. Residues Ser186 and Ser191 each carry the phosphoserine modification. Phosphothreonine is present on Thr193. Position 200 is a phosphoserine (Ser200).

In terms of assembly, two GP-Ib beta are disulfide-linked to one GP-Ib alpha. GP-IX is complexed with the GP-Ib heterodimer via a non covalent linkage. Interacts with TRAF4.

It is found in the membrane. Functionally, gp-Ib, a surface membrane protein of platelets, participates in the formation of platelet plugs by binding to von Willebrand factor, which is already bound to the subendothelium. The protein is Platelet glycoprotein Ib beta chain (Gp1bb) of Mus musculus (Mouse).